We begin with the raw amino-acid sequence, 256 residues long: tRNA (guanine-N(1)-)-methyltransferase (256 aa).

S-adenosyl-L-methionine-binding positions include glycine 119 and 139-144 (IGDYVV).

The protein belongs to the RNA methyltransferase TrmD family. In terms of assembly, homodimer.

It is found in the cytoplasm. The enzyme catalyses guanosine(37) in tRNA + S-adenosyl-L-methionine = N(1)-methylguanosine(37) in tRNA + S-adenosyl-L-homocysteine + H(+). Specifically methylates guanosine-37 in various tRNAs. This is tRNA (guanine-N(1)-)-methyltransferase from Nitrosospira multiformis (strain ATCC 25196 / NCIMB 11849 / C 71).